A 739-amino-acid polypeptide reads, in one-letter code: Phosphoribosylformylglycinamidine synthase subunit PurL (739 aa).

H54 is an active-site residue. 2 residues coordinate ATP: Y57 and K96. Residue E98 participates in Mg(2+) binding. Residues 99-102 (SHNH) and R121 each bind substrate. The Proton acceptor role is filled by H100. Residue D122 coordinates Mg(2+). A substrate-binding site is contributed by Q245. Residue D275 participates in Mg(2+) binding. 319-321 (ESQ) lines the substrate pocket. ATP-binding residues include D504 and G541. Residue N542 participates in Mg(2+) binding. S544 is a binding site for substrate.

The protein belongs to the FGAMS family. Monomer. Part of the FGAM synthase complex composed of 1 PurL, 1 PurQ and 2 PurS subunits.

Its subcellular location is the cytoplasm. The catalysed reaction is N(2)-formyl-N(1)-(5-phospho-beta-D-ribosyl)glycinamide + L-glutamine + ATP + H2O = 2-formamido-N(1)-(5-O-phospho-beta-D-ribosyl)acetamidine + L-glutamate + ADP + phosphate + H(+). It participates in purine metabolism; IMP biosynthesis via de novo pathway; 5-amino-1-(5-phospho-D-ribosyl)imidazole from N(2)-formyl-N(1)-(5-phospho-D-ribosyl)glycinamide: step 1/2. Its function is as follows. Part of the phosphoribosylformylglycinamidine synthase complex involved in the purines biosynthetic pathway. Catalyzes the ATP-dependent conversion of formylglycinamide ribonucleotide (FGAR) and glutamine to yield formylglycinamidine ribonucleotide (FGAM) and glutamate. The FGAM synthase complex is composed of three subunits. PurQ produces an ammonia molecule by converting glutamine to glutamate. PurL transfers the ammonia molecule to FGAR to form FGAM in an ATP-dependent manner. PurS interacts with PurQ and PurL and is thought to assist in the transfer of the ammonia molecule from PurQ to PurL. This chain is Phosphoribosylformylglycinamidine synthase subunit PurL, found in Lactococcus lactis subsp. cremoris (Streptococcus cremoris).